Consider the following 722-residue polypeptide: Ribosomal RNA large subunit methyltransferase K/L (722 aa).

One can recognise a THUMP domain in the interval 55-167 (TGYRACLWSR…GNEGTLYLDL (113 aa)).

This sequence belongs to the methyltransferase superfamily. RlmKL family.

It is found in the cytoplasm. The enzyme catalyses guanosine(2445) in 23S rRNA + S-adenosyl-L-methionine = N(2)-methylguanosine(2445) in 23S rRNA + S-adenosyl-L-homocysteine + H(+). It carries out the reaction guanosine(2069) in 23S rRNA + S-adenosyl-L-methionine = N(2)-methylguanosine(2069) in 23S rRNA + S-adenosyl-L-homocysteine + H(+). Its function is as follows. Specifically methylates the guanine in position 2445 (m2G2445) and the guanine in position 2069 (m7G2069) of 23S rRNA. The polypeptide is Ribosomal RNA large subunit methyltransferase K/L (Desulfotalea psychrophila (strain LSv54 / DSM 12343)).